We begin with the raw amino-acid sequence, 476 residues long: C-terminal-binding protein (476 aa).

Residues S100, 180–185 (VGLGRI), D204, 237–243 (CTLNEHN), 264–266 (TAR), and D290 each bind NAD(+). The active site involves R266. The active site involves E295. H315 functions as the Proton donor in the catalytic mechanism. An NAD(+)-binding site is contributed by 315 to 318 (HAAF). The tract at residues 445–476 (VSSQSPLSAPDPNNHLSSSIKTEVKAESTEAP) is disordered. Basic and acidic residues predominate over residues 466–476 (TEVKAESTEAP).

It belongs to the D-isomer specific 2-hydroxyacid dehydrogenase family. In terms of assembly, homodimer. Interacts with hairy (hry), knirps (kni), snail (sna), and Enhancer of split m-delta (HLHm-delta). Complex may be involved in transcriptional repression. Also interacts with adenovirus E1A protein.

Its subcellular location is the nucleus. Functionally, corepressor targeting diverse transcription regulators. Hairy-interacting protein required for embryonic segmentation and hairy-mediated transcriptional repression. This is C-terminal-binding protein (CtBP) from Drosophila melanogaster (Fruit fly).